The following is a 426-amino-acid chain: Serine--tRNA ligase (426 aa).

235–237 serves as a coordination point for L-serine; that stretch reads TAE. ATP-binding positions include 266–268 and valine 282; that span reads RRE. Glutamate 289 lines the L-serine pocket. Residue 353 to 356 participates in ATP binding; it reads EASS. Serine 389 contributes to the L-serine binding site.

Belongs to the class-II aminoacyl-tRNA synthetase family. Type-1 seryl-tRNA synthetase subfamily. In terms of assembly, homodimer. The tRNA molecule binds across the dimer.

The protein localises to the cytoplasm. The catalysed reaction is tRNA(Ser) + L-serine + ATP = L-seryl-tRNA(Ser) + AMP + diphosphate + H(+). It carries out the reaction tRNA(Sec) + L-serine + ATP = L-seryl-tRNA(Sec) + AMP + diphosphate + H(+). It functions in the pathway aminoacyl-tRNA biosynthesis; selenocysteinyl-tRNA(Sec) biosynthesis; L-seryl-tRNA(Sec) from L-serine and tRNA(Sec): step 1/1. Functionally, catalyzes the attachment of serine to tRNA(Ser). Is also able to aminoacylate tRNA(Sec) with serine, to form the misacylated tRNA L-seryl-tRNA(Sec), which will be further converted into selenocysteinyl-tRNA(Sec). This is Serine--tRNA ligase from Chlorobium chlorochromatii (strain CaD3).